The chain runs to 68 residues: Small ribosomal subunit protein bS21 (68 aa).

The disordered stretch occupies residues 39–68; sequence PPSVKRVRKKQESERRHRKERAMRRRMMEE. The span at 54–68 shows a compositional bias: basic residues; the sequence is RHRKERAMRRRMMEE.

It belongs to the bacterial ribosomal protein bS21 family.

The protein is Small ribosomal subunit protein bS21 of Orientia tsutsugamushi (strain Ikeda) (Rickettsia tsutsugamushi).